The sequence spans 470 residues: Sugar transporter ERD6-like 8 (470 aa).

Residues 1–16 show a composition bias toward basic and acidic residues; that stretch reads METRKDDMEKRNDKSE. Residues 1 to 24 form a disordered region; that stretch reads METRKDDMEKRNDKSEPLLLPENG. A run of 12 helical transmembrane segments spans residues 33–53, 73–93, 110–130, 133–153, 164–184, 188–208, 270–290, 307–327, 335–355, 373–393, 409–429, and 434–454; these read WMVYLSTIIAVCGSYEFGTCV, QFSVFGSILNMGAVLGAITSG, VISAIGWLIIYLAKGDVPLDF, FLTGYGCGTLSFVVPVFIAEI, TLNQLFIVIGLASMFLIGAVV, TLALTGVAPCVVLFFGTWFIP, FVIVGVGLMFFQQFVGINGVI, GSILYSIEQVVLTALGATLLI, LLMASAVGMLIGCLLIGNSFL, GVLVYIGSFSIGMGAIPWVIM, VTVVNWLSSWLVSFTFNFLMI, and GTFYVYGGVCVLAIIFIAKLV.

It belongs to the major facilitator superfamily. Sugar transporter (TC 2.A.1.1) family.

The protein resides in the membrane. Sugar transporter. The polypeptide is Sugar transporter ERD6-like 8 (Arabidopsis thaliana (Mouse-ear cress)).